The chain runs to 357 residues: tRNA N6-adenosine threonylcarbamoyltransferase (357 aa).

Fe cation is bound by residues His-115 and His-119. Substrate-binding positions include 137 to 141 (LASGG), Asp-170, Gly-183, and Asn-281. Asp-309 is a binding site for Fe cation.

This sequence belongs to the KAE1 / TsaD family. Fe(2+) serves as cofactor.

It is found in the cytoplasm. It catalyses the reaction L-threonylcarbamoyladenylate + adenosine(37) in tRNA = N(6)-L-threonylcarbamoyladenosine(37) in tRNA + AMP + H(+). In terms of biological role, required for the formation of a threonylcarbamoyl group on adenosine at position 37 (t(6)A37) in tRNAs that read codons beginning with adenine. Is involved in the transfer of the threonylcarbamoyl moiety of threonylcarbamoyl-AMP (TC-AMP) to the N6 group of A37, together with TsaE and TsaB. TsaD likely plays a direct catalytic role in this reaction. In Afipia carboxidovorans (strain ATCC 49405 / DSM 1227 / KCTC 32145 / OM5) (Oligotropha carboxidovorans), this protein is tRNA N6-adenosine threonylcarbamoyltransferase.